Consider the following 306-residue polypeptide: Lipoyl synthase (306 aa).

C55, C60, C66, C81, C85, C88, and S294 together coordinate [4Fe-4S] cluster. The Radical SAM core domain maps to 67–283; the sequence is WNHRTATFLL…RSYALARGFT (217 aa).

Belongs to the radical SAM superfamily. Lipoyl synthase family. The cofactor is [4Fe-4S] cluster.

Its subcellular location is the cytoplasm. It catalyses the reaction [[Fe-S] cluster scaffold protein carrying a second [4Fe-4S](2+) cluster] + N(6)-octanoyl-L-lysyl-[protein] + 2 oxidized [2Fe-2S]-[ferredoxin] + 2 S-adenosyl-L-methionine + 4 H(+) = [[Fe-S] cluster scaffold protein] + N(6)-[(R)-dihydrolipoyl]-L-lysyl-[protein] + 4 Fe(3+) + 2 hydrogen sulfide + 2 5'-deoxyadenosine + 2 L-methionine + 2 reduced [2Fe-2S]-[ferredoxin]. It participates in protein modification; protein lipoylation via endogenous pathway; protein N(6)-(lipoyl)lysine from octanoyl-[acyl-carrier-protein]: step 2/2. In terms of biological role, catalyzes the radical-mediated insertion of two sulfur atoms into the C-6 and C-8 positions of the octanoyl moiety bound to the lipoyl domains of lipoate-dependent enzymes, thereby converting the octanoylated domains into lipoylated derivatives. This chain is Lipoyl synthase, found in Chloroflexus aurantiacus (strain ATCC 29364 / DSM 637 / Y-400-fl).